Here is a 78-residue protein sequence, read N- to C-terminus: Acyl carrier protein (78 aa).

In terms of domain architecture, Carrier spans 2–77 (SSIEERVKKI…LAIDYINANL (76 aa)). Residue serine 37 is modified to O-(pantetheine 4'-phosphoryl)serine.

This sequence belongs to the acyl carrier protein (ACP) family. 4'-phosphopantetheine is transferred from CoA to a specific serine of apo-ACP by AcpS. This modification is essential for activity because fatty acids are bound in thioester linkage to the sulfhydryl of the prosthetic group.

The protein localises to the cytoplasm. Its pathway is lipid metabolism; fatty acid biosynthesis. Carrier of the growing fatty acid chain in fatty acid biosynthesis. The polypeptide is Acyl carrier protein (Cellvibrio japonicus (strain Ueda107) (Pseudomonas fluorescens subsp. cellulosa)).